Reading from the N-terminus, the 692-residue chain is Putative ESX-1 scaffolding and assembly protein SaeA (692 aa).

Residues 1–21 (MGERGELVSDLHPSDDHDADP) are compositionally biased toward basic and acidic residues. Disordered regions lie at residues 1–23 (MGER…DPRL) and 87–134 (PAAP…TTGF). The span at 89–107 (APEPDPPPVPEPQPEPEPG) shows a compositional bias: pro residues.

It localises to the cytoplasm. In terms of biological role, may be involved in assembly of the ESX-1 / type VII specialized secretion system (T7SS), which exports several proteins including EsxA and EsxB. Involved in DNA conjugation in recipient (MKD8) but not donor (mc(2)155) strain. In Mycolicibacterium smegmatis (strain ATCC 700084 / mc(2)155) (Mycobacterium smegmatis), this protein is Putative ESX-1 scaffolding and assembly protein SaeA.